The following is a 358-amino-acid chain: 4-diphosphocytidyl-2-C-methyl-D-erythritol kinase (358 aa).

The active site involves Lys24. Position 138-148 (138-148) interacts with ATP; it reads PVAGGMAGGSA. Asp186 is a catalytic residue.

This sequence belongs to the GHMP kinase family. IspE subfamily.

The catalysed reaction is 4-CDP-2-C-methyl-D-erythritol + ATP = 4-CDP-2-C-methyl-D-erythritol 2-phosphate + ADP + H(+). Its pathway is isoprenoid biosynthesis; isopentenyl diphosphate biosynthesis via DXP pathway; isopentenyl diphosphate from 1-deoxy-D-xylulose 5-phosphate: step 3/6. Catalyzes the phosphorylation of the position 2 hydroxy group of 4-diphosphocytidyl-2C-methyl-D-erythritol. In Corynebacterium jeikeium (strain K411), this protein is 4-diphosphocytidyl-2-C-methyl-D-erythritol kinase.